Here is a 303-residue protein sequence, read N- to C-terminus: N-acetyl-D-glucosamine kinase (303 aa).

ATP-binding positions include G4–K11 and G133–F140. The Zn(2+) site is built by H157, C177, C179, and C184.

Belongs to the ROK (NagC/XylR) family. NagK subfamily.

The catalysed reaction is N-acetyl-D-glucosamine + ATP = N-acetyl-D-glucosamine 6-phosphate + ADP + H(+). Its pathway is cell wall biogenesis; peptidoglycan recycling. Functionally, catalyzes the phosphorylation of N-acetyl-D-glucosamine (GlcNAc) derived from cell-wall degradation, yielding GlcNAc-6-P. This chain is N-acetyl-D-glucosamine kinase, found in Escherichia coli (strain K12 / DH10B).